The primary structure comprises 61 residues: Phosphoenolpyruvate synthase (61 aa).

Belongs to the PEP-utilizing enzyme family. Mg(2+) is required as a cofactor.

The catalysed reaction is pyruvate + ATP + H2O = phosphoenolpyruvate + AMP + phosphate + 2 H(+). It functions in the pathway carbohydrate biosynthesis; gluconeogenesis. In terms of biological role, catalyzes the phosphorylation of pyruvate to phosphoenolpyruvate. This chain is Phosphoenolpyruvate synthase (ppsA), found in Enterobacter agglomerans (Erwinia herbicola).